A 249-amino-acid chain; its full sequence is MTRKLVLLRHGQSQWNSMNRFTGWVDIGLTEQGHQEATMAGHLMKEEGLEFDVAHTSLLKRAIHTLQDALKALDQDWLPIYKSWRLNERHYGALQGLDKIDTAAKHGEEQVNIWRRSYDIQPPPIDLDDPSHPMRDRRYAALDRKVLPVTESLKNTLERVLPYWNDAIAPQLNDNKTVLISAHGNSLRALYKYLNQESDEKILNVNIPTGIPLLFELSDTLQVVSYRYLGDPDAAQRAAEMVANQGKAK.

Substrate is bound by residues 9–16, 22–23, arginine 61, 88–91, lysine 99, 115–116, and 184–185; these read RHGQSQWN, TG, ERHY, RR, and GN. Histidine 10 acts as the Tele-phosphohistidine intermediate in catalysis. Residue glutamate 88 is the Proton donor/acceptor of the active site.

Belongs to the phosphoglycerate mutase family. BPG-dependent PGAM subfamily. As to quaternary structure, homodimer.

The enzyme catalyses (2R)-2-phosphoglycerate = (2R)-3-phosphoglycerate. Its pathway is carbohydrate degradation; glycolysis; pyruvate from D-glyceraldehyde 3-phosphate: step 3/5. Its function is as follows. Catalyzes the interconversion of 2-phosphoglycerate and 3-phosphoglycerate. The polypeptide is 2,3-bisphosphoglycerate-dependent phosphoglycerate mutase (Xylella fastidiosa (strain M12)).